Reading from the N-terminus, the 172-residue chain is ATP synthase subunit b (172 aa).

A helical membrane pass occupies residues 12–32 (VGFNAGTMLFQLVAMLILLAL).

Belongs to the ATPase B chain family. In terms of assembly, F-type ATPases have 2 components, F(1) - the catalytic core - and F(0) - the membrane proton channel. F(1) has five subunits: alpha(3), beta(3), gamma(1), delta(1), epsilon(1). F(0) has three main subunits: a(1), b(2) and c(10-14). The alpha and beta chains form an alternating ring which encloses part of the gamma chain. F(1) is attached to F(0) by a central stalk formed by the gamma and epsilon chains, while a peripheral stalk is formed by the delta and b chains.

The protein resides in the cell membrane. F(1)F(0) ATP synthase produces ATP from ADP in the presence of a proton or sodium gradient. F-type ATPases consist of two structural domains, F(1) containing the extramembraneous catalytic core and F(0) containing the membrane proton channel, linked together by a central stalk and a peripheral stalk. During catalysis, ATP synthesis in the catalytic domain of F(1) is coupled via a rotary mechanism of the central stalk subunits to proton translocation. In terms of biological role, component of the F(0) channel, it forms part of the peripheral stalk, linking F(1) to F(0). This chain is ATP synthase subunit b, found in Bacillus licheniformis (strain ATCC 14580 / DSM 13 / JCM 2505 / CCUG 7422 / NBRC 12200 / NCIMB 9375 / NCTC 10341 / NRRL NRS-1264 / Gibson 46).